A 257-amino-acid polypeptide reads, in one-letter code: MSTVQAIRTVLFYLLLSASAFVWGTLSFFIAPILPFRARYRFVVQNWCRFAIWLTRVVAGIRYEVRGLENIPEKPCVILSKHQSTWETFFLSGFFEPLSQVLKRELLYVPFFGWALALLKPIAIDRSQPKLALKQLAKQGDECLKKGAWVLIFPEGTRIPVGQMGKFSRGGTALAVNAGLPVLPIAHNAGQYWPKAGWAKYPGTIQVVIGPAMHAEGEGPRAIAELNQRAEAWVSETMAEISPIQQRVSHPEPSVVS.

A helical transmembrane segment spans residues V10–I30. Positions H82–E87 match the HXXXXD motif motif. Residues E105 to D125 traverse the membrane as a helical segment.

Belongs to the 1-acyl-sn-glycerol-3-phosphate acyltransferase family.

The protein resides in the cell inner membrane. The enzyme catalyses a 1-acyl-sn-glycero-3-phosphate + an acyl-CoA = a 1,2-diacyl-sn-glycero-3-phosphate + CoA. It functions in the pathway phospholipid metabolism; CDP-diacylglycerol biosynthesis; CDP-diacylglycerol from sn-glycerol 3-phosphate: step 2/3. Converts lysophosphatidic acid (LPA) into phosphatidic acid by incorporating acyl moiety at the 2 position. This Pseudomonas aeruginosa (strain ATCC 15692 / DSM 22644 / CIP 104116 / JCM 14847 / LMG 12228 / 1C / PRS 101 / PAO1) protein is 1-acyl-sn-glycerol-3-phosphate acyltransferase.